The primary structure comprises 670 residues: DNA ligase (670 aa).

NAD(+) contacts are provided by residues 36-40 (DAQYD), 85-86 (SL), and glutamate 116. Lysine 118 (N6-AMP-lysine intermediate) is an active-site residue. NAD(+) contacts are provided by arginine 139, glutamate 174, lysine 290, and lysine 314. Residues cysteine 408, cysteine 411, cysteine 426, and cysteine 431 each contribute to the Zn(2+) site. Residues 591–670 (STDQTLSGKT…QDFVKLLQQQ (80 aa)) enclose the BRCT domain.

Belongs to the NAD-dependent DNA ligase family. LigA subfamily. It depends on Mg(2+) as a cofactor. Mn(2+) serves as cofactor.

It catalyses the reaction NAD(+) + (deoxyribonucleotide)n-3'-hydroxyl + 5'-phospho-(deoxyribonucleotide)m = (deoxyribonucleotide)n+m + AMP + beta-nicotinamide D-nucleotide.. Its function is as follows. DNA ligase that catalyzes the formation of phosphodiester linkages between 5'-phosphoryl and 3'-hydroxyl groups in double-stranded DNA using NAD as a coenzyme and as the energy source for the reaction. It is essential for DNA replication and repair of damaged DNA. The polypeptide is DNA ligase (Desulforamulus reducens (strain ATCC BAA-1160 / DSM 100696 / MI-1) (Desulfotomaculum reducens)).